The primary structure comprises 149 residues: MQVILLDKIVHLGQVGDQVNVKSGFARNFLIPQGKAVMATKANIEHFEARRAELEATAAANLAAAQARAAEVTALGSVTIASKAGDEGRLFGAITTRDVAEAVTAAGVKIAKSEVRLPNGPIRTLGDHDVRFQLHGEVFAALDVIVVAE.

Belongs to the bacterial ribosomal protein bL9 family.

Its function is as follows. Binds to the 23S rRNA. In Haemophilus influenzae (strain PittEE), this protein is Large ribosomal subunit protein bL9.